We begin with the raw amino-acid sequence, 237 residues long: Ribosomal RNA small subunit methyltransferase G (237 aa).

S-adenosyl-L-methionine contacts are provided by residues Gly-72, Leu-77, 123–124, and Arg-138; that span reads AE. Residues 210 to 237 are disordered; the sequence is TALETGTKAAPSRSPRKPGGRKKRGRKR. Basic residues predominate over residues 223 to 237; that stretch reads SPRKPGGRKKRGRKR.

It belongs to the methyltransferase superfamily. RNA methyltransferase RsmG family.

The protein resides in the cytoplasm. Specifically methylates the N7 position of guanine in position 518 of 16S rRNA. The chain is Ribosomal RNA small subunit methyltransferase G from Thermobifida fusca (strain YX).